We begin with the raw amino-acid sequence, 98 residues long: NADH-ubiquinone oxidoreductase chain 4L (98 aa).

3 helical membrane-spanning segments follow: residues 1 to 21 (MSPIFMNITLAFTISLLGMLV), 26 to 46 (LMASLLCLEGMMMSLFIMIAL), and 61 to 81 (IILLVFAACETAVGLALLVSI).

It belongs to the complex I subunit 4L family. As to quaternary structure, core subunit of respiratory chain NADH dehydrogenase (Complex I) which is composed of 45 different subunits.

It localises to the mitochondrion inner membrane. It carries out the reaction a ubiquinone + NADH + 5 H(+)(in) = a ubiquinol + NAD(+) + 4 H(+)(out). Functionally, core subunit of the mitochondrial membrane respiratory chain NADH dehydrogenase (Complex I) which catalyzes electron transfer from NADH through the respiratory chain, using ubiquinone as an electron acceptor. Part of the enzyme membrane arm which is embedded in the lipid bilayer and involved in proton translocation. The sequence is that of NADH-ubiquinone oxidoreductase chain 4L (MT-ND4L) from Chlorocebus sabaeus (Green monkey).